The chain runs to 253 residues: uncharacterized protein (253 aa).

Positions 200–209 (TGREHAHKGP) are enriched in basic and acidic residues. 2 disordered regions span residues 200–225 (TGREHAHKGPELTTPDSGLPRPPNPA) and 234–253 (QHSPPLGTSTPSAVLLSAAT).

In terms of tissue distribution, most abundantly expressed in gastrointestinal tissues. Expressed at lower levels in kidney and placenta. Expressed in fetal brain, liver, placenta, kidney and lung.

This is an uncharacterized protein from Homo sapiens (Human).